The sequence spans 75 residues: MIRRSCALLSSSWRDHGISYLKYLNVCTETLHSTVKESRRAKYERWSKPCYTAQRPDGAGGQETIDKVPIHTKDY.

The transit peptide at 1–9 (MIRRSCALL) directs the protein to the mitochondrion.

Belongs to the eukaryotic ATPase epsilon family. In terms of assembly, F-type ATPases have 2 components, F(1) - the catalytic core - and F(o) - the membrane proton channel. F(1) has five subunits: alpha(3), beta(3), gamma(1), delta(1), epsilon(1), plus the additional subunit P18 (Tb427.05.1710) that is not present in F(1)F(o) ATP synthase from metazoa. Subunit P18 (Tb927.5.1710) interacts with the alpha subunit with a 1:1 stoichiometry; the interaction is direct. Subunit gamma is part of the central stalk. F(o) has three main subunits: a, b and c. The trypanosomal ATPase complex contains additional subunits that are not present in the F(1)F(o) ATP synthase from metazoa.

It localises to the mitochondrion. The protein resides in the mitochondrion inner membrane. Functionally, mitochondrial membrane ATP synthase (F(1)F(o) ATP synthase) produces ATP from ADP in the presence of a proton gradient across the membrane which is generated by electron transport complexes of the respiratory chain. F-type ATPases consist of two structural domains, F(1) - containing the extramembraneous catalytic core, and F(o) - containing the membrane proton channel, linked together by a central stalk and a peripheral stalk. During catalysis, ATP synthesis in the catalytic domain of F(1) is coupled via a rotary mechanism of the central stalk subunits to proton translocation. Subunits alpha and beta form the catalytic core in F(1). Rotation of the central stalk against the surrounding alpha(3)beta(3) subunits leads to hydrolysis of ATP in three separate catalytic sites on the beta subunits. Contrary to the procyclic, insect form that requires F(1)F(o) ATP synthase for ATP synthesis, the bloodstream form relies on ATP hydrolysis by F(1)F(o) ATP synthase to maintain its mitochondrial membrane potential. In Trypanosoma brucei brucei, this protein is ATP synthase subunit epsilon, mitochondrial.